The chain runs to 625 residues: Chaperone protein HtpG (625 aa).

Residues 1–337 (MNIQKKEVYS…SNNLPLNVSR (337 aa)) form an a; substrate-binding region. The b stretch occupies residues 338–552 (EILQDNSITQ…SNEMSTQMAK (215 aa)). Residues 553-625 (LFSAAGQSVP…ARTNKLILEQ (73 aa)) form a c region.

The protein belongs to the heat shock protein 90 family. Homodimer.

It is found in the cytoplasm. In terms of biological role, molecular chaperone. Has ATPase activity. The polypeptide is Chaperone protein HtpG (Buchnera aphidicola subsp. Schizaphis graminum (strain Sg)).